Reading from the N-terminus, the 574-residue chain is Avenacosidase 1 (574 aa).

Residues 1-55 (MALLCSALSNSTHPSFRSHIGANSENLWHLSADPAQKSKRRCNLTLSSRAARISS) constitute a chloroplast transit peptide. Residues Gln88, His192, and 237–238 (NE) each bind a beta-D-glucoside. Catalysis depends on Glu238, which acts as the Proton donor. A disulfide bridge connects residues Cys258 and Cys264. A beta-D-glucoside is bound by residues Tyr381, Glu454, Trp505, 512-513 (EW), and Phe521. The active-site Nucleophile is the Glu454.

It belongs to the glycosyl hydrolase 1 family. Homo- and heteromultimer with P60B in a 1:1 stoichiometry. Aggregates to form the fibrillar stromacentre. Expressed in caryopses, coleoptiles, primary leaves, and etiolated and green seedlings, but not in roots.

Its subcellular location is the plastid. It localises to the chloroplast stroma. It catalyses the reaction avenacoside B + H2O = 26-desgluco-avenacoside B + D-glucose. Its activity is regulated as follows. Inhibited by N-(3-Dimethylaminopropyl)-N'-ethylcarbodiimide hydrochloride (EDC). Functionally, beta-glucosidase acting as a preformed defense system. Hydrolyzes the bisdesmosides avenacosides A and B to 26-desgluco-avenacosides exhibiting fungicidal activity. Can use beta-fucoside &gt; beta-glucoside &gt; beta-galactoside &gt; beta-xyloside as substrates, but not alpha-glycosides, beta-thioglucosides and disaccharides. In Avena sativa (Oat), this protein is Avenacosidase 1 (P60A).